Consider the following 628-residue polypeptide: MSISSCSAQDGCASTAMTRTAMRQNKFATSAPASVPRLTGTEPQLGSMQGAQELLEQLKASFTSSHLIQAIGLSGRQLPLLTKDQEILPYLFNAAGVRYVQPHPNGDASQRILLLNVPASSPTPDVVLSAILKHRLELIHEFELSLGYEHLSSDQILEALLPTSIVDTDGVPTGFTIVGHIAHLNLLSVYKPFRFLVGHIILSKHIGTLRTVVNKLDSIDTQFRFFEMELLAGEADFVAQVSESDCSFQFDFRSVYWNSRLHAEHMRLIKKCRPNQVLADVMAGVGPFAVPAAKRGTWVLANDLNPSSYESLTKNAEINKVLLREGEAKPDKDGGLVATCMDGREFVRWSMLEVWKRGFAGRPMGFDGEQFDVQDDKLRQSARKMRKEQAKKNRALYAVRQAENTLEGAAESLANLSVDEPDVAATMGQVERHPERKLVDHFVMNLPAIALEFLDAFRGAYTHLATIVGKQRLLCQLELHKLDASIHRLPMIHVHCFSKDPFTPALDILTRANEALNIPRDAPYRLMAKPILPPAQTFAGLRKLCDASQSASYLSSHPNYSKYKHLESQHDFMQYVHQEWLERDAAQHTPNLSIHYVRDVAPNKQMYCLSFQCPSQVLWANTSTSQHT.

S-adenosyl-L-methionine is bound by residues H265, 303–304 (DL), 342–343 (DG), and N445.

It belongs to the class I-like SAM-binding methyltransferase superfamily. TRM5/TYW2 family. Monomer.

The protein resides in the mitochondrion matrix. The protein localises to the nucleus. It is found in the cytoplasm. The catalysed reaction is guanosine(37) in tRNA + S-adenosyl-L-methionine = N(1)-methylguanosine(37) in tRNA + S-adenosyl-L-homocysteine + H(+). In terms of biological role, specifically methylates the N1 position of guanosine-37 in various cytoplasmic and mitochondrial tRNAs. Methylation is not dependent on the nature of the nucleoside 5' of the target nucleoside. This is the first step in the biosynthesis of wybutosine (yW), a modified base adjacent to the anticodon of tRNAs and required for accurate decoding. The sequence is that of tRNA (guanine(37)-N(1))-methyltransferase from Mycosarcoma maydis (Corn smut fungus).